The primary structure comprises 438 residues: Serine--tRNA ligase (438 aa).

245–247 (TAE) contributes to the L-serine binding site. Residue 276 to 278 (RSE) coordinates ATP. E299 serves as a coordination point for L-serine. An ATP-binding site is contributed by 363–366 (EISS). Residue S398 coordinates L-serine.

This sequence belongs to the class-II aminoacyl-tRNA synthetase family. Type-1 seryl-tRNA synthetase subfamily. In terms of assembly, homodimer. The tRNA molecule binds across the dimer.

It is found in the cytoplasm. The enzyme catalyses tRNA(Ser) + L-serine + ATP = L-seryl-tRNA(Ser) + AMP + diphosphate + H(+). The catalysed reaction is tRNA(Sec) + L-serine + ATP = L-seryl-tRNA(Sec) + AMP + diphosphate + H(+). The protein operates within aminoacyl-tRNA biosynthesis; selenocysteinyl-tRNA(Sec) biosynthesis; L-seryl-tRNA(Sec) from L-serine and tRNA(Sec): step 1/1. Functionally, catalyzes the attachment of serine to tRNA(Ser). Is also able to aminoacylate tRNA(Sec) with serine, to form the misacylated tRNA L-seryl-tRNA(Sec), which will be further converted into selenocysteinyl-tRNA(Sec). In Delftia acidovorans (strain DSM 14801 / SPH-1), this protein is Serine--tRNA ligase.